Here is a 157-residue protein sequence, read N- to C-terminus: MAPIRNRRGKRNNLKLKLNLTEEITIRNNCNFDSLPIRGPKEVRNPCRSRYAPMTRAEKKYQDRQNRDFYCSTDASYWGIYYRNSHPLKGVTYRSHVMFGIKKFIPDMSPKNAIDYNRWVDVSSDLNHLEDDDFLELEGQYAAGIIKTSDLSKYALQ.

This is an uncharacterized protein from Magallana gigas (Pacific oyster).